A 465-amino-acid polypeptide reads, in one-letter code: ATP synthase subunit beta (465 aa).

153–160 (GGAGVGKT) is an ATP binding site.

This sequence belongs to the ATPase alpha/beta chains family. F-type ATPases have 2 components, CF(1) - the catalytic core - and CF(0) - the membrane proton channel. CF(1) has five subunits: alpha(3), beta(3), gamma(1), delta(1), epsilon(1). CF(0) has three main subunits: a(1), b(2) and c(9-12). The alpha and beta chains form an alternating ring which encloses part of the gamma chain. CF(1) is attached to CF(0) by a central stalk formed by the gamma and epsilon chains, while a peripheral stalk is formed by the delta and b chains.

The protein localises to the cell membrane. It catalyses the reaction ATP + H2O + 4 H(+)(in) = ADP + phosphate + 5 H(+)(out). Its function is as follows. Produces ATP from ADP in the presence of a proton gradient across the membrane. The catalytic sites are hosted primarily by the beta subunits. This is ATP synthase subunit beta from Clostridium perfringens (strain SM101 / Type A).